A 324-amino-acid chain; its full sequence is uncharacterized protein (324 aa).

To the C-terminal of para-aminobenzoate synthase component I.

This is an uncharacterized protein from Pasteurella multocida (strain Pm70).